The primary structure comprises 201 residues: MLNQLRPALVLLVALTAITGLAYPLAVTGVAGALFPAKAAGSLIERDGRIVGSSLIGQSFTGECYFHGRPSATTAADPADASKTVAAPYNAANSAGSNLGPTSAALAERVKGDLAALKAENPGRPVPVDLVTTSGSGLDPDVSPEAALFQVPRIARARNLPEDRLRDLVAGQLQGRTLGLLGEPRVNVLALNLVLVDLAKR.

A helical transmembrane segment spans residues 7 to 27 (PALVLLVALTAITGLAYPLAV).

It belongs to the KdpC family. In terms of assembly, the system is composed of three essential subunits: KdpA, KdpB and KdpC.

Its subcellular location is the cell inner membrane. Functionally, part of the high-affinity ATP-driven potassium transport (or Kdp) system, which catalyzes the hydrolysis of ATP coupled with the electrogenic transport of potassium into the cytoplasm. This subunit acts as a catalytic chaperone that increases the ATP-binding affinity of the ATP-hydrolyzing subunit KdpB by the formation of a transient KdpB/KdpC/ATP ternary complex. This is Potassium-transporting ATPase KdpC subunit from Methylorubrum extorquens (strain CM4 / NCIMB 13688) (Methylobacterium extorquens).